The primary structure comprises 468 residues: Tyrosine phenol-lyase (468 aa).

Lysine 260 carries the post-translational modification N6-(pyridoxal phosphate)lysine.

Belongs to the beta-eliminating lyase family. As to quaternary structure, homotetramer. The cofactor is pyridoxal 5'-phosphate.

The enzyme catalyses L-tyrosine + H2O = phenol + pyruvate + NH4(+). This chain is Tyrosine phenol-lyase, found in Lacrimispora saccharolytica (strain ATCC 35040 / DSM 2544 / NRCC 2533 / WM1) (Clostridium saccharolyticum).